The chain runs to 95 residues: Small ribosomal subunit protein uS15 (95 aa).

The protein belongs to the universal ribosomal protein uS15 family. As to quaternary structure, part of the 30S ribosomal subunit. Forms a bridge to the 50S subunit in the 70S ribosome, contacting the 23S rRNA.

Its function is as follows. One of the primary rRNA binding proteins, it binds directly to 16S rRNA where it helps nucleate assembly of the platform of the 30S subunit by binding and bridging several RNA helices of the 16S rRNA. In terms of biological role, forms an intersubunit bridge (bridge B4) with the 23S rRNA of the 50S subunit in the ribosome. This chain is Small ribosomal subunit protein uS15, found in Sulfurihydrogenibium sp. (strain YO3AOP1).